A 218-amino-acid polypeptide reads, in one-letter code: Redox-sensing transcriptional repressor Rex (218 aa).

Positions 18–57 (LYYRFIQSLHASGKQRVSSAELSEAVKVDSATIRRDFSYF) form a DNA-binding region, H-T-H motif. 92–97 (GVGHLG) lines the NAD(+) pocket.

The protein belongs to the transcriptional regulatory Rex family. As to quaternary structure, homodimer.

Its subcellular location is the cytoplasm. Modulates transcription in response to changes in cellular NADH/NAD(+) redox state. This chain is Redox-sensing transcriptional repressor Rex, found in Exiguobacterium sp. (strain ATCC BAA-1283 / AT1b).